We begin with the raw amino-acid sequence, 144 residues long: Probable subtilase-type protease inhibitor (144 aa).

The N-terminal stretch at 1-34 is a signal peptide; the sequence is MPNTARWAVTLTLTATAVCGPLAGASLATPNAAA. 2 disulfides stabilise this stretch: Cys-66–Cys-81 and Cys-102–Cys-132.

This sequence belongs to the protease inhibitor I16 (SSI) family. Homodimer.

Its subcellular location is the secreted. Strong inhibitor of bacterial serine proteases such as subtilisin. In Streptomyces avermitilis (strain ATCC 31267 / DSM 46492 / JCM 5070 / NBRC 14893 / NCIMB 12804 / NRRL 8165 / MA-4680), this protein is Probable subtilase-type protease inhibitor (sti1).